A 196-amino-acid chain; its full sequence is UPF0316 protein LBL_2483 (196 aa).

Transmembrane regions (helical) follow at residues 12–32, 44–64, and 70–90; these read YCVL…IGTI, IAAS…TQVI, and ALCY…GMIL.

It belongs to the UPF0316 family.

It is found in the cell membrane. The chain is UPF0316 protein LBL_2483 from Leptospira borgpetersenii serovar Hardjo-bovis (strain L550).